Consider the following 315-residue polypeptide: tRNA dimethylallyltransferase (315 aa).

Gly-10–Thr-17 provides a ligand contact to ATP. Thr-12 to Thr-17 is a substrate binding site. The interval Asp-35–Gln-38 is interaction with substrate tRNA.

This sequence belongs to the IPP transferase family. As to quaternary structure, monomer. Requires Mg(2+) as cofactor.

The enzyme catalyses adenosine(37) in tRNA + dimethylallyl diphosphate = N(6)-dimethylallyladenosine(37) in tRNA + diphosphate. In terms of biological role, catalyzes the transfer of a dimethylallyl group onto the adenine at position 37 in tRNAs that read codons beginning with uridine, leading to the formation of N6-(dimethylallyl)adenosine (i(6)A). The chain is tRNA dimethylallyltransferase from Geobacillus kaustophilus (strain HTA426).